Reading from the N-terminus, the 266-residue chain is Small ribosomal subunit protein uS2 (266 aa).

A disordered region spans residues 233 to 266 (AVREEEFASAPDAGKKGRQAQPKKGKRASDAAAE). Basic residues predominate over residues 248–258 (KGRQAQPKKGK).

It belongs to the universal ribosomal protein uS2 family.

The sequence is that of Small ribosomal subunit protein uS2 from Xylella fastidiosa (strain M23).